Consider the following 384-residue polypeptide: Flap endonuclease 1 (384 aa).

An N-domain region spans residues M1–R105. Mg(2+) is bound at residue D34. Residues R47 and R71 each coordinate DNA. D87, E159, E161, D180, and D182 together coordinate Mg(2+). An I-domain region spans residues D123–H254. E159 contacts DNA. G232 and D234 together coordinate DNA. Residue D234 coordinates Mg(2+). Residues I341–F349 form an interaction with PCNA region. The segment at K354–R384 is disordered. Residues G362–G375 are compositionally biased toward basic and acidic residues.

This sequence belongs to the XPG/RAD2 endonuclease family. FEN1 subfamily. In terms of assembly, interacts with PCNA. Three molecules of FEN1 bind to one PCNA trimer with each molecule binding to one PCNA monomer. PCNA stimulates the nuclease activity without altering cleavage specificity. Mg(2+) serves as cofactor. In terms of processing, phosphorylated. Phosphorylation upon DNA damage induces relocalization to the nuclear plasma.

It is found in the nucleus. Its subcellular location is the nucleolus. The protein localises to the nucleoplasm. The protein resides in the mitochondrion. Its function is as follows. Structure-specific nuclease with 5'-flap endonuclease and 5'-3' exonuclease activities involved in DNA replication and repair. During DNA replication, cleaves the 5'-overhanging flap structure that is generated by displacement synthesis when DNA polymerase encounters the 5'-end of a downstream Okazaki fragment. It enters the flap from the 5'-end and then tracks to cleave the flap base, leaving a nick for ligation. Also involved in the long patch base excision repair (LP-BER) pathway, by cleaving within the apurinic/apyrimidinic (AP) site-terminated flap. Acts as a genome stabilization factor that prevents flaps from equilibrating into structures that lead to duplications and deletions. Also possesses 5'-3' exonuclease activity on nicked or gapped double-stranded DNA, and exhibits RNase H activity. Also involved in replication and repair of rDNA and in repairing mitochondrial DNA. This is Flap endonuclease 1 from Lodderomyces elongisporus (strain ATCC 11503 / CBS 2605 / JCM 1781 / NBRC 1676 / NRRL YB-4239) (Yeast).